The primary structure comprises 664 residues: Methionine--tRNA ligase (664 aa).

The 'HIGH' region signature appears at 13–23; the sequence is PYTNGPCHLGH. Zn(2+) is bound by residues Cys-144, Cys-147, Cys-156, and Cys-160. The 'KMSKS' region motif lies at 327-331; it reads KFSKS. Position 330 (Lys-330) interacts with ATP. One can recognise a tRNA-binding domain in the interval 566–664; the sequence is EFAKVEMKTG…TPVPSGTKIR (99 aa).

Belongs to the class-I aminoacyl-tRNA synthetase family. MetG type 1 subfamily. In terms of assembly, homodimer. The cofactor is Zn(2+).

Its subcellular location is the cytoplasm. The enzyme catalyses tRNA(Met) + L-methionine + ATP = L-methionyl-tRNA(Met) + AMP + diphosphate. Its function is as follows. Is required not only for elongation of protein synthesis but also for the initiation of all mRNA translation through initiator tRNA(fMet) aminoacylation. This is Methionine--tRNA ligase from Methanospirillum hungatei JF-1 (strain ATCC 27890 / DSM 864 / NBRC 100397 / JF-1).